We begin with the raw amino-acid sequence, 179 residues long: Large ribosomal subunit protein uL5 (179 aa).

This sequence belongs to the universal ribosomal protein uL5 family. As to quaternary structure, part of the 50S ribosomal subunit; part of the 5S rRNA/L5/L18/L25 subcomplex. Contacts the 5S rRNA and the P site tRNA. Forms a bridge to the 30S subunit in the 70S ribosome.

Its function is as follows. This is one of the proteins that bind and probably mediate the attachment of the 5S RNA into the large ribosomal subunit, where it forms part of the central protuberance. In the 70S ribosome it contacts protein S13 of the 30S subunit (bridge B1b), connecting the 2 subunits; this bridge is implicated in subunit movement. Contacts the P site tRNA; the 5S rRNA and some of its associated proteins might help stabilize positioning of ribosome-bound tRNAs. This chain is Large ribosomal subunit protein uL5, found in Actinobacillus pleuropneumoniae serotype 5b (strain L20).